We begin with the raw amino-acid sequence, 81 residues long: MRKDIHPKNNLVVFKDGSNGAMFLTKSTLNSKETIKYIDGKEYPLITVEITSKSHPFYTGQQKFVDAAGRIDKFNKRYKKS.

This sequence belongs to the bacterial ribosomal protein bL31 family. Type B subfamily. Part of the 50S ribosomal subunit.

This is Large ribosomal subunit protein bL31B from Borreliella burgdorferi (strain ZS7) (Borrelia burgdorferi).